A 263-amino-acid polypeptide reads, in one-letter code: Hydroxyacylglutathione hydrolase (263 aa).

Positions 60, 62, 64, 65, 120, 137, and 175 each coordinate Zn(2+).

It belongs to the metallo-beta-lactamase superfamily. Glyoxalase II family. Monomer. Requires Zn(2+) as cofactor.

The catalysed reaction is an S-(2-hydroxyacyl)glutathione + H2O = a 2-hydroxy carboxylate + glutathione + H(+). The protein operates within secondary metabolite metabolism; methylglyoxal degradation; (R)-lactate from methylglyoxal: step 2/2. Its function is as follows. Thiolesterase that catalyzes the hydrolysis of S-D-lactoyl-glutathione to form glutathione and D-lactic acid. The chain is Hydroxyacylglutathione hydrolase from Shewanella pealeana (strain ATCC 700345 / ANG-SQ1).